The primary structure comprises 722 residues: Biotin--protein ligase (722 aa).

Residues lysine 27–leucine 93 are disordered. The segment covering alanine 46–glycine 55 has biased composition (low complexity). Position 295 is a phosphoserine (serine 295). One can recognise a BPL/LPL catalytic domain in the interval threonine 459–glutamine 648.

The protein belongs to the biotin--protein ligase family. Monomer.

Its subcellular location is the cytoplasm. The protein resides in the mitochondrion. The enzyme catalyses apo-[methylmalonyl-CoA:pyruvate carboxytransferase] + biotin + ATP = holo-[methylmalonyl-CoA:pyruvate carboxytransferase] + AMP + diphosphate + H(+). It carries out the reaction apo-[propionyl-CoA:carbon-dioxide ligase (ADP-forming)] + biotin + ATP = holo-[propionyl-CoA:carbon-dioxide ligase (ADP-forming)] + AMP + diphosphate + H(+). It catalyses the reaction apo-[3-methylcrotonoyl-CoA:carbon-dioxide ligase (ADP-forming)] + biotin + ATP = holo-[3-methylcrotonoyl-CoA:carbon-dioxide ligase (ADP-forming)] + AMP + diphosphate + H(+). The catalysed reaction is biotin + L-lysyl-[protein] + ATP = N(6)-biotinyl-L-lysyl-[protein] + AMP + diphosphate + H(+). In terms of biological role, biotin--protein ligase catalyzing the biotinylation of the 4 biotin-dependent carboxylases acetyl-CoA-carboxylase, pyruvate carboxylase, propionyl-CoA carboxylase, and methylcrotonyl-CoA carboxylase. The protein is Biotin--protein ligase of Mus musculus (Mouse).